The following is a 399-amino-acid chain: Zinc finger HIT domain-containing protein 2 (399 aa).

Position 1 is an N-acetylmethionine (methionine 1). Zn(2+) is bound by residues cysteine 7, cysteine 10, cysteine 22, cysteine 25, cysteine 30, cysteine 34, histidine 38, and cysteine 41. Residues 7 to 41 form an HIT-type zinc finger; sequence CGFCPTGEAQPARYTCPRCNVPYCSLRCYRAHGSC. Disordered stretches follow at residues 71 to 97 and 141 to 166; these read LRQQ…GLSG and EELG…PEPV.

Interacts (via HIT-type zinc finger) with RUVBL2 in the presence of ATP or ADP; shows a stronger interaction in the presence of ADP.

Functionally, may act as a bridging factor mediating the interaction between the R2TP/Prefoldin-like (R2TP/PFDL) complex and U5 small nuclear ribonucleoprotein (U5 snRNP). Required for the interaction of R2TP complex subunit RPAP3 and prefoldin-like subunit URI1 with U5 snRNP proteins EFTUD2 and PRPF8. May play a role in regulating the composition of the U5 snRNP complex. This is Zinc finger HIT domain-containing protein 2 (ZNHIT2) from Bos taurus (Bovine).